Consider the following 357-residue polypeptide: Phospho-N-acetylmuramoyl-pentapeptide-transferase (357 aa).

The next 10 helical transmembrane spans lie at 23–43 (AIFSLLTSFFINLYIGPYFIY), 70–90 (TMGGIFIIFSILFSTILYCNL), 91–111 (SNIYIWYVISILIGYGLIGFI), 127–147 (LKWKYFFLSIIAFIFICMIKI), 171–191 (YLYIFLSYFVLVGTSNAVNLT), 196–216 (GLAIMPVIFLTCGLTLISLFS), 236–256 (LAILCMAIVGSGLGFLWFNSY), 260–280 (VFMGDVGSLALGGSLGAIAIL), 286–306 (LLIIMGGIFVFETISVILQII), and 334–354 (LIIVRFWIVSLILLLISLISL).

The protein belongs to the glycosyltransferase 4 family. MraY subfamily. Requires Mg(2+) as cofactor.

Its subcellular location is the cell inner membrane. It carries out the reaction UDP-N-acetyl-alpha-D-muramoyl-L-alanyl-gamma-D-glutamyl-meso-2,6-diaminopimeloyl-D-alanyl-D-alanine + di-trans,octa-cis-undecaprenyl phosphate = di-trans,octa-cis-undecaprenyl diphospho-N-acetyl-alpha-D-muramoyl-L-alanyl-D-glutamyl-meso-2,6-diaminopimeloyl-D-alanyl-D-alanine + UMP. It participates in cell wall biogenesis; peptidoglycan biosynthesis. In terms of biological role, catalyzes the initial step of the lipid cycle reactions in the biosynthesis of the cell wall peptidoglycan: transfers peptidoglycan precursor phospho-MurNAc-pentapeptide from UDP-MurNAc-pentapeptide onto the lipid carrier undecaprenyl phosphate, yielding undecaprenyl-pyrophosphoryl-MurNAc-pentapeptide, known as lipid I. The polypeptide is Phospho-N-acetylmuramoyl-pentapeptide-transferase (Buchnera aphidicola subsp. Acyrthosiphon pisum (strain APS) (Acyrthosiphon pisum symbiotic bacterium)).